A 208-amino-acid chain; its full sequence is Fusaric acid resistance protein FusD (208 aa).

Residues 7-29 (LLLSMLVSAIAFAVLFPPTAPWL) form a helical membrane-spanning segment.

The protein resides in the cell membrane. Its function is as follows. Involved in the resistance (detoxification) of the fungal toxin fusaric acid. The protein is Fusaric acid resistance protein FusD (fusD) of Burkholderia cepacia (Pseudomonas cepacia).